The following is a 1087-amino-acid chain: Platelet-derived growth factor receptor alpha (1087 aa).

An N-terminal signal peptide occupies residues 1–24; the sequence is MMPAMRASLILGCLLIIGPWAILA. Residues 25-530 are Extracellular-facing; sequence ENPLPTIFPD…PTLRSELTVA (506 aa). Ig-like C2-type domains follow at residues 27–114 and 118–211; these read PLPT…SEIE and IYIY…LQTW. The cysteines at positions 50 and 101 are disulfide-linked. 2 N-linked (GlcNAc...) asparagine glycosylation sites follow: asparagine 77 and asparagine 104. Cysteine 151 and cysteine 192 are joined by a disulfide. 7 N-linked (GlcNAc...) asparagine glycosylation sites follow: asparagine 216, asparagine 282, asparagine 309, asparagine 356, asparagine 362, asparagine 461, and asparagine 471. Ig-like C2-type domains are found at residues 217-309, 315-409, and 417-519; these read ISVE…KKTN, KGFI…KSYS, and PALI…LKLV. Cysteines 238 and 293 form a disulfide. Cysteine 438 and cysteine 503 are disulfide-bonded. A helical transmembrane segment spans residues 531-551; sequence AAVLVLLVIVIISLIVLVIIW. The Cytoplasmic segment spans residues 552 to 1087; it reads KQKPRYEIRW…SSDLVEDSFL (536 aa). Phosphotyrosine; by autocatalysis occurs at positions 574 and 576. The Protein kinase domain occupies 595 to 970; sequence LVLGRILGSG…CYETVLHDFL (376 aa). ATP contacts are provided by residues 601-609 and lysine 629; that span reads LGSGAFGKV. A phosphotyrosine; by autocatalysis mark is found at tyrosine 722, tyrosine 733, tyrosine 744, tyrosine 756, and tyrosine 764. The Proton acceptor role is filled by aspartate 818. Phosphotyrosine; by autocatalysis is present on residues tyrosine 849, tyrosine 988, and tyrosine 1017. Residues 1017 to 1064 form a disordered region; that stretch reads YIIPLPDIDPVSEDESGKRNRHSSQTSEESAIETGSSSSTFIKRDDET. The segment covering 1039–1057 has biased composition (polar residues); sequence SSQTSEESAIETGSSSSTF.

This sequence belongs to the protein kinase superfamily. Tyr protein kinase family. CSF-1/PDGF receptor subfamily. Interacts with homodimeric pdgfa, pdgfb and pdgfc, and with heterodimers formed by pdgfa and pdgfb. Monomer in the absence of bound ligand. Interaction with dimeric pdgfa, pdgfb and/or pdgfc leads to receptor dimerization, where both pdgfra homodimers and heterodimers with pdgfrb are observed. Ubiquitinated, leading to its internalization and degradation. Post-translationally, autophosphorylated on tyrosine residues upon ligand binding. Autophosphorylation occurs in trans, i.e. one subunit of the dimeric receptor phosphorylates tyrosine residues on the other subunit.

The protein resides in the cell membrane. Its subcellular location is the cell projection. It is found in the cilium. It localises to the golgi apparatus. The enzyme catalyses L-tyrosyl-[protein] + ATP = O-phospho-L-tyrosyl-[protein] + ADP + H(+). Present in an inactive conformation in the absence of bound ligand. Binding of pdgfa and/or pdgfb leads to dimerization and activation by autophosphorylation on tyrosine residues. Tyrosine-protein kinase that acts as a cell-surface receptor for pdgfa, pdgfb and pdgfc and plays an essential role in the regulation of embryonic development, cell proliferation, survival and chemotaxis. Depending on the context, promotes or inhibits cell proliferation and cell migration. Plays an important role in the differentiation of bone marrow-derived mesenchymal stem cells. Required for normal skeleton development. Required for normal development of the gastrointestinal tract. Plays a role in cell migration and chemotaxis in wound healing. Plays a role in platelet activation, secretion of agonists from platelet granules, and in thrombin-induced platelet aggregation. Binding of its cognate ligands - homodimeric pdgfa, homodimeric pdgfb, heterodimers formed by pdgfa and pdgfb or homodimeric pdgfc -leads to the activation of several signaling cascades; the response depends on the nature of the bound ligand and is modulated by the formation of heterodimers between pdgfra and pdgfrb. Phosphorylates pik3r1, plcg1, and ptpn11. Activation of plcg1 leads to the production of the cellular signaling molecules diacylglycerol and inositol 1,4,5-trisphosphate, mobilization of cytosolic Ca(2+) and the activation of protein kinase C. Phosphorylates pik3r1, the regulatory subunit of phosphatidylinositol 3-kinase, and thereby mediates activation of the akt1 signaling pathway. Mediates activation of hras and of the MAP kinases mapk1/erk2 and/or mapk3/erk1. Promotes activation of stat family members stat1, stat3 and stat5a and/or stat5b. Receptor signaling is down-regulated by protein phosphatases that dephosphorylate the receptor and its down-stream effectors, and by rapid internalization of the activated receptor. This Xenopus laevis (African clawed frog) protein is Platelet-derived growth factor receptor alpha (pdgfra).